Reading from the N-terminus, the 138-residue chain is Large ribosomal subunit protein uL16 (138 aa).

The protein belongs to the universal ribosomal protein uL16 family. As to quaternary structure, part of the 50S ribosomal subunit.

Functionally, binds 23S rRNA and is also seen to make contacts with the A and possibly P site tRNAs. This is Large ribosomal subunit protein uL16 from Ureaplasma urealyticum serovar 10 (strain ATCC 33699 / Western).